A 428-amino-acid chain; its full sequence is NADH-ubiquinone oxidoreductase chain 2 (428 aa).

A run of 14 helical transmembrane segments spans residues 22–42 (IAFLSLLGYFVIMLNIWLHFG), 59–79 (LDESILSALLFILFLGLVIMN), 84–104 (LGWEFHLLLMGGLTGAIYMLT), 108–128 (LLLMVVGFEFLNLSTYLILSL), 140–160 (LLSSAFYTTLLLLAISFFYGL), 185–205 (ILLLGTIAFKLGLVPAHLWVP), 218–238 (WMGSVPKAAVLLWLPTIYPLL), 241–261 (LAPFLLVLSALSFLLSAVLMA), 269–289 (FLAYSAIGHLGFVVAAFAIGD), 292–312 (AYGYYIFIYMIATLAQFVLLS), 332–352 (LGLGFLVIVLTMASLPPFAGF), 356–376 (LLVLFGFLEIGYGIFAVLLIL), 384–404 (YYLKWIQTTFFSVVPFASAPI), and 408–428 (YPNLVSFLVTLILPSTLLLLL).

Belongs to the complex I subunit 2 family.

Its subcellular location is the mitochondrion inner membrane. The enzyme catalyses a ubiquinone + NADH + 5 H(+)(in) = a ubiquinol + NAD(+) + 4 H(+)(out). Core subunit of the mitochondrial membrane respiratory chain NADH dehydrogenase (Complex I) that is believed to belong to the minimal assembly required for catalysis. Complex I functions in the transfer of electrons from NADH to the respiratory chain. The immediate electron acceptor for the enzyme is believed to be ubiquinone. The chain is NADH-ubiquinone oxidoreductase chain 2 from Hyaloraphidium curvatum (Lower fungus).